The primary structure comprises 246 residues: MSGHSKWHNIQAKKGKTDAKRGKIFTKIGKELMVAVKNGGPSPETNNRLRDIIAKAKAANMPNDTITRSIKKASGELGSVNYENIIYEGYGPSGVAVIVETLTDNKNRSAGNVRSAFTKGGGNMGTQGCVGFMFQEKGEMVIEKADKDEDEMMMLALDAGAEDFNADEDEVFVVTTTPEDFGTVREALEAEGIEFLEADVKMIPDTYTAIDEADAKKFQKMLDLLEDDEDVQEVYHNAEFPEGWEE.

It belongs to the TACO1 family.

The protein localises to the cytoplasm. This is Probable transcriptional regulatory protein CLL_A1008 from Clostridium botulinum (strain Eklund 17B / Type B).